Consider the following 561-residue polypeptide: Oxygen-dependent choline dehydrogenase (561 aa).

7–36 contacts FAD; the sequence is DYIIVGAGSAGNVLASRLTEDADVTVLLLE. His474 serves as the catalytic Proton acceptor.

This sequence belongs to the GMC oxidoreductase family. FAD serves as cofactor.

The catalysed reaction is choline + A = betaine aldehyde + AH2. The enzyme catalyses betaine aldehyde + NAD(+) + H2O = glycine betaine + NADH + 2 H(+). It functions in the pathway amine and polyamine biosynthesis; betaine biosynthesis via choline pathway; betaine aldehyde from choline (cytochrome c reductase route): step 1/1. In terms of biological role, involved in the biosynthesis of the osmoprotectant glycine betaine. Catalyzes the oxidation of choline to betaine aldehyde and betaine aldehyde to glycine betaine at the same rate. This Paraburkholderia phytofirmans (strain DSM 17436 / LMG 22146 / PsJN) (Burkholderia phytofirmans) protein is Oxygen-dependent choline dehydrogenase.